A 382-amino-acid chain; its full sequence is MNHDESEEKTESPTSYRLKISKETGHNRYYRELYSLLILTITLINFWYNQRLILTLLKRIFYLSFTFNNSIFQNDLFLDHNFLMIFQDNLISLLGIIFFPMLIFMFPAMILCCSNFNFKFIKFDINKLNPILGFKNVFSIKSIVDLFKTVLKIVFVSIVVYLFISKYFLKVCFSSNFTFDYILNYSVRTIFLCFLTILIFFIPIIIIDLFWEKYNFYRSLRMTRKEVSDELKNMEGNPRIKSRIRQIMFSISNRRMLSNVSKSDVIVVNPMHYAIAIKYNETNMYAPKILAKGIDELAIKIKKIGNNHSIPTLVSHSLAHVLYYRTEVGEYIPSVLYEAVAEVLAWVWKIRHWKIKGGVFPRTPEKFFIPSELYEKRIKKRG.

Transmembrane regions (helical) follow at residues 33 to 55 (LYSL…LILT), 90 to 112 (LISL…MILC), 150 to 169 (VLKI…KYFL), and 189 to 211 (TIFL…DLFW).

It belongs to the type III secretion exporter family.

The protein resides in the cell membrane. In terms of biological role, required for formation of the rod structure in the basal body of the flagellar apparatus. Together with FliI and FliH, may constitute the export apparatus of flagellin. This Buchnera aphidicola subsp. Baizongia pistaciae (strain Bp) protein is Flagellar biosynthetic protein FlhB (flhB).